A 375-amino-acid polypeptide reads, in one-letter code: Alcohol dehydrogenase 3, mitochondrial (375 aa).

The transit peptide at 1–24 (MLRTSTLFTRRVQPSLFSRNILRL) directs the protein to the mitochondrion. C71 lines the Zn(2+) pocket. The NAD(+) site is built by H72, T73, and H76. Zn(2+)-binding residues include H94, E95, C125, C128, C131, C139, and C181. Residues G208, G209, L210, D229, K234, F249, V296, S321, V323, and R368 each coordinate NAD(+).

The protein belongs to the zinc-containing alcohol dehydrogenase family. In terms of assembly, homotetramer. Zn(2+) serves as cofactor.

It is found in the mitochondrion matrix. It localises to the mitochondrion inner membrane. The catalysed reaction is a primary alcohol + NAD(+) = an aldehyde + NADH + H(+). The enzyme catalyses a secondary alcohol + NAD(+) = a ketone + NADH + H(+). It catalyses the reaction ethanol + NAD(+) = acetaldehyde + NADH + H(+). It carries out the reaction butan-1-ol + NAD(+) = butanal + NADH + H(+). The catalysed reaction is hexan-1-ol + NAD(+) = hexanal + NADH + H(+). Mitochondrial isozyme that reduces acetaldehyde to ethanol during the fermentation of glucose. Involved in the shuttling of mitochondrial reducing equivalents to the cytosol, where the redox balance is restored by NADH dehydrogenases on the external side of the mitochondrial inner membrane. Shows a high affinity for alcohols with a double bond conjugated to the alcohol group. The sequence is that of Alcohol dehydrogenase 3, mitochondrial (ADH3) from Saccharomyces cerevisiae (strain ATCC 204508 / S288c) (Baker's yeast).